The following is a 116-amino-acid chain: Protein Rev (116 aa).

Residue serine 5 is modified to Phosphoserine; by host CK2. The segment at 18–26 (YIKILYQSN) is homomultimerization. The Nuclear localization signal and RNA-binding (RRE) signature appears at 34–50 (TRKARRNRRRRWRARQR). Positions 73-84 (LQLPLLEKLHIN) match the Nuclear export signal and binding to XPO1 motif. The disordered stretch occupies residues 90 to 116 (GQGTEKGVGSPQISVESRAVLGSGTKE). Serine 99 carries the post-translational modification Phosphoserine; by host.

This sequence belongs to the HIV-1 REV protein family. In terms of assembly, homomultimer; when bound to the RRE. Multimeric assembly is essential for activity and may involve XPO1. Binds to human KPNB1, XPO1, TNPO1, RANBP5 and IPO7. Interacts with the viral Integrase. Interacts with human KHDRBS1. Interacts with human NAP1; this interaction decreases Rev multimerization and stimulates its activity. Interacts with human DEAD-box helicases DDX3 and DDX24; these interactions may serve for viral RNA export to the cytoplasm and packaging, respectively. Interacts with human PSIP1; this interaction may inhibit HIV-1 DNA integration by promoting dissociation of the Integrase-LEDGF/p75 complex. In terms of processing, asymmetrically arginine dimethylated at one site by host PRMT6. Methylation impairs the RNA-binding activity and export of viral RNA from the nucleus to the cytoplasm. Post-translationally, phosphorylated by protein kinase CK2. Presence of, and maybe binding to the N-terminus of the regulatory beta subunit of CK2 is necessary for CK2-mediated Rev's phosphorylation.

Its subcellular location is the host nucleus. It is found in the host nucleolus. The protein localises to the host cytoplasm. Escorts unspliced or incompletely spliced viral pre-mRNAs (late transcripts) out of the nucleus of infected cells. These pre-mRNAs carry a recognition sequence called Rev responsive element (RRE) located in the env gene, that is not present in fully spliced viral mRNAs (early transcripts). This function is essential since most viral proteins are translated from unspliced or partially spliced pre-mRNAs which cannot exit the nucleus by the pathway used by fully processed cellular mRNAs. Rev itself is translated from a fully spliced mRNA that readily exits the nucleus. Rev's nuclear localization signal (NLS) binds directly to KPNB1/Importin beta-1 without previous binding to KPNA1/Importin alpha-1. KPNB1 binds to the GDP bound form of RAN (Ran-GDP) and targets Rev to the nucleus. In the nucleus, the conversion from Ran-GDP to Ran-GTP dissociates Rev from KPNB1 and allows Rev's binding to the RRE in viral pre-mRNAs. Rev multimerization on the RRE via cooperative assembly exposes its nuclear export signal (NES) to the surface. Rev can then form a complex with XPO1/CRM1 and Ran-GTP, leading to nuclear export of the complex. Conversion from Ran-GTP to Ran-GDP mediates dissociation of the Rev/RRE/XPO1/RAN complex, so that Rev can return to the nucleus for a subsequent round of export. Beside KPNB1, also seems to interact with TNPO1/Transportin-1, RANBP5/IPO5 and IPO7/RANBP7 for nuclear import. The nucleoporin-like HRB/RIP is an essential cofactor that probably indirectly interacts with Rev to release HIV RNAs from the perinuclear region to the cytoplasm. The protein is Protein Rev of Human immunodeficiency virus type 1 group M subtype F2 (isolate MP257) (HIV-1).